A 58-amino-acid chain; its full sequence is Small ribosomal subunit protein bS21 (58 aa).

The protein belongs to the bacterial ribosomal protein bS21 family.

This Synechococcus sp. (strain CC9605) protein is Small ribosomal subunit protein bS21.